The primary structure comprises 181 residues: ADP-ribosylation factor 1 (181 aa).

Gly2 is lipidated: N-myristoyl glycine. GTP-binding positions include 24–31 (GLDAAGKT), 67–71 (DVGGQ), and 126–129 (NKQD).

Belongs to the small GTPase superfamily. Arf family.

Its subcellular location is the golgi apparatus. It carries out the reaction GTP + H2O = GDP + phosphate + H(+). Functionally, GTP-binding protein involved in protein trafficking; may modulate vesicle budding and uncoating within the Golgi apparatus. The protein is ADP-ribosylation factor 1 (ARF1) of Chlamydomonas reinhardtii (Chlamydomonas smithii).